A 990-amino-acid chain; its full sequence is Tyrosine-protein phosphatase 3 (990 aa).

4 disordered regions span residues 47–88, 100–193, 246–414, and 431–452; these read QSQS…SPSV, NKIN…SNIE, PNQQ…SFSQ, and KPEMASKKSHKHHQRHYSHNDL. 2 stretches are compositionally biased toward low complexity: residues 52–88 and 100–117; these read NTNTNNINNSSSNINNNNNNTPDSMSMSTSLSSSPSV and NKINNNTTTNNNNNNNNN. A compositionally biased stretch (polar residues) spans 127-136; the sequence is LKLSNTMIIK. 5 stretches are compositionally biased toward low complexity: residues 137-191, 250-271, 278-293, 310-327, and 334-413; these read NNNN…SNSN, SSSSSSLSSTTTTTTTTSSSLL, NNSTYNNHHNNNNSSN, QAQVQLQQMQQQMQQHQQ, and NLSS…TSFS. The Tyrosine-protein phosphatase domain occupies 422 to 715; sequence MRLEFEMIKK…IFIFKVINDV (294 aa). Basic residues predominate over residues 437–447; the sequence is KKSHKHHQRHY. The Phosphocysteine intermediate role is filled by Cys-650. Polar residues predominate over residues 786–795; it reads PPQQQQDNPF. Disordered regions lie at residues 786–814 and 834–990; these read PPQQQQDNPFSKSSIKISPSPLNSTNISI and LQQQ…IKCF. 2 stretches are compositionally biased toward low complexity: residues 796 to 806 and 834 to 850; these read SKSSIKISPSP and LQQQQQQSSQQLNDNPP. Positions 851 to 868 are enriched in polar residues; it reads LNMSSNSIKFPPVTSLSS. Composition is skewed to low complexity over residues 878–916 and 924–968; these read NDNNNKQQQQQQQQQQKNNQQCSGFSHFLNNNNNNDNNG and GSFL…SDNN.

Belongs to the protein-tyrosine phosphatase family. Non-receptor class subfamily. As to expression, in the anterior-like and prestalk cell types.

Its subcellular location is the cytoplasm. The catalysed reaction is O-phospho-L-tyrosyl-[protein] + H2O = L-tyrosyl-[protein] + phosphate. In terms of biological role, seems to dephosphorylate a protein of 130 kDa (p130). The chain is Tyrosine-protein phosphatase 3 (ptpC) from Dictyostelium discoideum (Social amoeba).